The following is a 617-amino-acid chain: Cell pattern formation-associated protein STUA (617 aa).

The interval 1 to 79 (MNQPAADMYY…PASQMGQNVL (79 aa)) is disordered. The span at 24-34 (TVTSGAMSYHS) shows a compositional bias: polar residues. The span at 45-58 (PQYAPQPQYSQYGY) shows a compositional bias: low complexity. The span at 61 to 76 (GLTSPQSAQPASQMGQ) shows a compositional bias: polar residues. Residues 106–212 (RVTATLWEDE…HNIGALLYHP (107 aa)) enclose the HTH APSES-type domain. The H-T-H motif DNA-binding region spans 140-161 (GTKLLNVAGMTRGRRDGILKSE). 3 disordered regions span residues 223-274 (AAAE…MGRP), 300-451 (SDSG…DSGA), and 463-617 (APAV…PRRR). Low complexity-rich tracts occupy residues 305 to 318 (QWAQ…AQGA) and 334 to 345 (PATPASTPPGTT). Polar residues-rich tracts occupy residues 346–361 (IQNM…QYDN) and 368–382 (PSAQ…NPAS). Positions 438 to 447 (EHDHDAEYTH) are enriched in basic and acidic residues. The span at 488–509 (PASGRATPRTAAAPQPYYSQQA) shows a compositional bias: low complexity. Composition is skewed to polar residues over residues 519-533 (QQPS…SNDR) and 553-563 (SMSNGYASQMN). Residues 569–593 (KRGRDEDDDLQRPSSGGGMDLKRRK) form a nuclear localization domain region. The segment covering 599–617 (QVPAMAYAPPVMAQQPRRR) has biased composition (low complexity).

Belongs to the EFG1/PHD1/stuA family.

It is found in the nucleus. Transcription factor that regulates asexual reproduction. Binds the StuA-response elements (StRE) with the consensus sequence 5'-(A/T)CGCG(T/A)N(A/C)-3' at the promoters of target genes. Required for the formation of aerial hyphae, efficient conidiation, and the formation of perithecia. Essential for the generation of normal turgor pressure within the appressorium. Required for infection of intact apple fruit and penetration of onion epidermal cells. The sequence is that of Cell pattern formation-associated protein STUA from Colletotrichum gloeosporioides (Anthracnose fungus).